The primary structure comprises 439 residues: 3-phosphoshikimate 1-carboxyvinyltransferase (439 aa).

Residues K27, S28, and R32 each coordinate 3-phosphoshikimate. Position 27 (K27) interacts with phosphoenolpyruvate. Residues G101 and R130 each coordinate phosphoenolpyruvate. Residues S175, Q177, D326, and K353 each contribute to the 3-phosphoshikimate site. Q177 contacts phosphoenolpyruvate. The Proton acceptor role is filled by D326. Residues R357 and R399 each coordinate phosphoenolpyruvate.

The protein belongs to the EPSP synthase family. In terms of assembly, monomer.

It is found in the cytoplasm. It carries out the reaction 3-phosphoshikimate + phosphoenolpyruvate = 5-O-(1-carboxyvinyl)-3-phosphoshikimate + phosphate. It participates in metabolic intermediate biosynthesis; chorismate biosynthesis; chorismate from D-erythrose 4-phosphate and phosphoenolpyruvate: step 6/7. In terms of biological role, catalyzes the transfer of the enolpyruvyl moiety of phosphoenolpyruvate (PEP) to the 5-hydroxyl of shikimate-3-phosphate (S3P) to produce enolpyruvyl shikimate-3-phosphate and inorganic phosphate. In Synechococcus sp. (strain CC9311), this protein is 3-phosphoshikimate 1-carboxyvinyltransferase.